Here is a 274-residue protein sequence, read N- to C-terminus: Large ribosomal subunit protein uL2cz/uL2cy (274 aa).

A disordered region spans residues 224–274; sequence NPVDHPHGGGEGRAPIGRKKPTTPWGYPALGRRSRKRNKYSDNLILRRRSK.

This sequence belongs to the universal ribosomal protein uL2 family. Part of the 50S ribosomal subunit.

It is found in the plastid. The protein resides in the chloroplast. The protein is Large ribosomal subunit protein uL2cz/uL2cy (rpl2-A) of Panax ginseng (Korean ginseng).